A 244-amino-acid chain; its full sequence is L-xylulose reductase (244 aa).

The residue at position 1 (M1) is an N-acetylmethionine. Position 11-39 (11-39) interacts with NADP(+); the sequence is LVTGAGKGIGRSIVKALHAAGARVVAVSR. R21 carries the post-translational modification Omega-N-methylarginine. S46 is modified (phosphoserine). Position 136 (S136) interacts with substrate. Y149 (proton acceptor) is an active-site residue. K153 is a catalytic residue.

The protein belongs to the short-chain dehydrogenases/reductases (SDR) family. As to quaternary structure, homotetramer.

It is found in the membrane. The catalysed reaction is xylitol + NADP(+) = L-xylulose + NADPH + H(+). Catalyzes the NADPH-dependent reduction of several pentoses, tetroses, trioses, alpha-dicarbonyl compounds and L-xylulose. Participates in the uronate cycle of glucose metabolism. May play a role in the water absorption and cellular osmoregulation in the proximal renal tubules by producing xylitol, an osmolyte, thereby preventing osmolytic stress from occurring in the renal tubules. This chain is L-xylulose reductase (DCXR), found in Bos taurus (Bovine).